A 163-amino-acid chain; its full sequence is ECF RNA polymerase sigma factor SigM (163 aa).

The Polymerase core binding signature appears at 30–43 (DLLQETFMRAYIHI). The H-T-H motif DNA-binding region spans 127–146 (YKEASHIMNISEANFKSVLF).

Belongs to the sigma-70 factor family. ECF subfamily. In terms of assembly, interacts with the N-terminus of YhdL, which is probably its anti-sigma factor. Interacts transiently with the RNAP core.

In terms of biological role, sigma factors are initiation factors that promote the attachment of RNA polymerase (RNAP) to specific initiation sites and are then released. Extracytoplasmic function (ECF) sigma factors are held in an inactive form by a cognate anti-sigma factor (YhdL) until released. This sigma factor is involved in the maintenance of membrane and cell wall integrity in response to environmental stresses including salt, acid, ethanol and antibiotics stress. Partially regulates transcription from a number of genes including disA. Associates with RNAP core under all growth phases. The chain is ECF RNA polymerase sigma factor SigM (sigM) from Bacillus subtilis (strain 168).